The following is a 385-amino-acid chain: DNA replication and repair protein RecF (385 aa).

Position 30–37 (30–37 (GPNGYGKT)) interacts with ATP.

Belongs to the RecF family.

Its subcellular location is the cytoplasm. Its function is as follows. The RecF protein is involved in DNA metabolism; it is required for DNA replication and normal SOS inducibility. RecF binds preferentially to single-stranded, linear DNA. It also seems to bind ATP. The polypeptide is DNA replication and repair protein RecF (Mycobacterium tuberculosis (strain ATCC 25177 / H37Ra)).